Here is a 134-residue protein sequence, read N- to C-terminus: ATP synthase epsilon chain (134 aa).

Belongs to the ATPase epsilon chain family. As to quaternary structure, F-type ATPases have 2 components, CF(1) - the catalytic core - and CF(0) - the membrane proton channel. CF(1) has five subunits: alpha(3), beta(3), gamma(1), delta(1), epsilon(1). CF(0) has three main subunits: a, b and c.

It is found in the cell membrane. Functionally, produces ATP from ADP in the presence of a proton gradient across the membrane. This chain is ATP synthase epsilon chain, found in Carboxydothermus hydrogenoformans (strain ATCC BAA-161 / DSM 6008 / Z-2901).